The chain runs to 165 residues: Mediator of RNA polymerase II transcription subunit 10 (165 aa).

Disordered stretches follow at residues 54-81 (SLHT…DPAL) and 143-165 (LRGE…RERG). Polar residues predominate over residues 62–77 (TASTTAPNQYQSTNPN).

This sequence belongs to the Mediator complex subunit 10 family. In terms of assembly, component of the Mediator complex.

Its subcellular location is the nucleus. Component of the Mediator complex, a coactivator involved in the regulated transcription of nearly all RNA polymerase II-dependent genes. Mediator functions as a bridge to convey information from gene-specific regulatory proteins to the basal RNA polymerase II transcription machinery. Mediator is recruited to promoters by direct interactions with regulatory proteins and serves as a scaffold for the assembly of a functional preinitiation complex with RNA polymerase II and the general transcription factors. The protein is Mediator of RNA polymerase II transcription subunit 10 (nut2) of Emericella nidulans (strain FGSC A4 / ATCC 38163 / CBS 112.46 / NRRL 194 / M139) (Aspergillus nidulans).